Reading from the N-terminus, the 234-residue chain is Segregation and condensation protein A (234 aa).

It belongs to the ScpA family. Component of a cohesin-like complex composed of ScpA, ScpB and the Smc homodimer, in which ScpA and ScpB bind to the head domain of Smc. The presence of the three proteins is required for the association of the complex with DNA.

It localises to the cytoplasm. Participates in chromosomal partition during cell division. May act via the formation of a condensin-like complex containing Smc and ScpB that pull DNA away from mid-cell into both cell halves. The protein is Segregation and condensation protein A of Streptococcus pyogenes serotype M18 (strain MGAS8232).